A 169-amino-acid polypeptide reads, in one-letter code: 6,7-dimethyl-8-ribityllumazine synthase (169 aa).

5-amino-6-(D-ribitylamino)uracil contacts are provided by residues phenylalanine 24, 58–60, and 82–84; these read ALE and AVI. Residue 87–88 coordinates (2S)-2-hydroxy-3-oxobutyl phosphate; the sequence is ET. Histidine 90 functions as the Proton donor in the catalytic mechanism. Position 115 (asparagine 115) interacts with 5-amino-6-(D-ribitylamino)uracil. Position 129 (arginine 129) interacts with (2S)-2-hydroxy-3-oxobutyl phosphate.

This sequence belongs to the DMRL synthase family.

It catalyses the reaction (2S)-2-hydroxy-3-oxobutyl phosphate + 5-amino-6-(D-ribitylamino)uracil = 6,7-dimethyl-8-(1-D-ribityl)lumazine + phosphate + 2 H2O + H(+). Its pathway is cofactor biosynthesis; riboflavin biosynthesis; riboflavin from 2-hydroxy-3-oxobutyl phosphate and 5-amino-6-(D-ribitylamino)uracil: step 1/2. Functionally, catalyzes the formation of 6,7-dimethyl-8-ribityllumazine by condensation of 5-amino-6-(D-ribitylamino)uracil with 3,4-dihydroxy-2-butanone 4-phosphate. This is the penultimate step in the biosynthesis of riboflavin. In Burkholderia vietnamiensis (strain G4 / LMG 22486) (Burkholderia cepacia (strain R1808)), this protein is 6,7-dimethyl-8-ribityllumazine synthase.